The sequence spans 430 residues: MRLNKGSIIEKMKNQNIKTQTELAEKIDISKSQLSFMFSDEYEPLKKNVIKLADVLKVSPNDIILDEEDQMPINSDFNRYDYKLDEFIDVSNVRKNKDYNVFETFAGAGGLALGLESAGLSTYGAVEIDKNAAETLRINRPKWKVIENDIEFIADNLDEFIDEEIDILSGGYPCQTFSYAGKRNGFADTRGTLFYPYSKILSKLKPKAFIAENVRGLVNHDDGKTLEVMLKVFIKEGYEVYWNILNSWNYDVAQKRERIVIIGIREDLVKEQKYPFRFPLAQVYKPVLKDVLKDVPKSKVTAYSDKKREVMKLVPPGGCWVDLPEQIAKDYMGKSWYSGGGKRGMARRISWDEPCLTLTTSPSQKQTERCHPDETRPFSIREYARIQSFPDEWEFSGGVGAQYRQIGNAVPVNLAKYIGKSLVHYLNQFN.

The 55-residue stretch at 9–63 folds into the HTH cro/C1-type domain; it reads IEKMKNQNIKTQTELAEKIDISKSQLSFMFSDEYEPLKKNVIKLADVLKVSPNDI. Positions 99-429 constitute an SAM-dependent MTase C5-type domain; the sequence is YNVFETFAGA…KSLVHYLNQF (331 aa). The active site involves cysteine 174.

It belongs to the class I-like SAM-binding methyltransferase superfamily. C5-methyltransferase family.

The enzyme catalyses a 2'-deoxycytidine in DNA + S-adenosyl-L-methionine = a 5-methyl-2'-deoxycytidine in DNA + S-adenosyl-L-homocysteine + H(+). A methylase that recognizes the double-stranded sequence 5'-GGNCC-3', methylates C-4 on both strands, and protects the DNA from cleavage by the Sau96I endonuclease. This Staphylococcus aureus protein is Type II methyltransferase M.Sau96I.